Consider the following 66-residue polypeptide: Large ribosomal subunit protein bL35 (66 aa).

A compositionally biased stretch (basic residues) spans 1-16; that stretch reads MPKQKTHRASAKRFKR. The tract at residues 1–20 is disordered; the sequence is MPKQKTHRASAKRFKRTGSG.

Belongs to the bacterial ribosomal protein bL35 family.

This chain is Large ribosomal subunit protein bL35, found in Streptococcus thermophilus (strain ATCC BAA-250 / LMG 18311).